Reading from the N-terminus, the 225-residue chain is Putative membrane protease YugP (225 aa).

Position 95 (His95) interacts with Zn(2+). Residue Glu96 is part of the active site. Zn(2+) contacts are provided by His99 and His103. Transmembrane regions (helical) follow at residues 116-138, 140-162, and 192-212; these read IFPV…MLLG, LNLI…ITLP, and VLSA…FELL.

It is found in the cell membrane. The polypeptide is Putative membrane protease YugP (yugP) (Bacillus subtilis (strain 168)).